A 278-amino-acid chain; its full sequence is Serine/arginine-rich splicing factor SR34B (278 aa).

Residues R7–G82 enclose the RRM 1 domain. The segment covering H81–R91 has biased composition (basic and acidic residues). Disordered regions lie at residues H81 to R121 and E192 to S263. Residues S95 to G107 are compositionally biased toward gly residues. 2 stretches are compositionally biased toward basic and acidic residues: residues G108–Y120 and E192–S201. An RRM 2 domain is found at Y120 to S195. Phosphoserine occurs at positions 201, 203, 225, 231, 233, 242, 250, 259, and 263. Positions S207–P243 are enriched in basic residues.

Belongs to the splicing factor SR family. SR subfamily. In terms of assembly, component of the spliceosome.

The protein resides in the nucleus speckle. It localises to the nucleus. The protein localises to the nucleoplasm. Functionally, probably involved in intron recognition and spliceosome assembly. In Arabidopsis thaliana (Mouse-ear cress), this protein is Serine/arginine-rich splicing factor SR34B (SR34B).